Here is a 304-residue protein sequence, read N- to C-terminus: MHLLTLENLERKDIENILNDAIYFKKNRKSENILKEKTVALIFESPSTRTRISFDIAVNELGGHSLTLNTGETHVSKKESTKDTAKVLSRFVDVIVARVKEHSTLEDFTKYGNVPVINALSDLSHPCQILADLLTIKEHKNKLSGLKFAYFGDGNNVCNSLILGCAIMGMDIFVATPEGYEPNEKFVKMAQQIIDKQGEGSITITDDAIICAKDADVLYTDVWVSMSDKNKNIDEVLKIFPPYQINEKLLSYAKKDAIVMHCLPANRGMEITDEVIDGEQSVVYDEAENRLHAQKAVFKYIFSK.

Carbamoyl phosphate contacts are provided by residues 47–50, R98, and 125–128; these read STRT and HPCQ. Residues N156, D221, and 225-226 contribute to the L-ornithine site; that span reads SM. Residues 262–263 and R290 each bind carbamoyl phosphate; that span reads CL.

It belongs to the aspartate/ornithine carbamoyltransferase superfamily. OTCase family.

Its subcellular location is the cytoplasm. It catalyses the reaction carbamoyl phosphate + L-ornithine = L-citrulline + phosphate + H(+). Its pathway is amino-acid biosynthesis; L-arginine biosynthesis; L-arginine from L-ornithine and carbamoyl phosphate: step 1/3. Reversibly catalyzes the transfer of the carbamoyl group from carbamoyl phosphate (CP) to the N(epsilon) atom of ornithine (ORN) to produce L-citrulline. This chain is Ornithine carbamoyltransferase, found in Methanococcus aeolicus (strain ATCC BAA-1280 / DSM 17508 / OCM 812 / Nankai-3).